Reading from the N-terminus, the 93-residue chain is Small ribosomal subunit protein uS17 (93 aa).

The protein belongs to the universal ribosomal protein uS17 family. As to quaternary structure, part of the 30S ribosomal subunit.

In terms of biological role, one of the primary rRNA binding proteins, it binds specifically to the 5'-end of 16S ribosomal RNA. The sequence is that of Small ribosomal subunit protein uS17 from Corynebacterium aurimucosum (strain ATCC 700975 / DSM 44827 / CIP 107346 / CN-1) (Corynebacterium nigricans).